We begin with the raw amino-acid sequence, 1201 residues long: DNA-directed RNA polymerase subunit beta' (1201 aa).

Cysteine 60, cysteine 62, cysteine 75, and cysteine 78 together coordinate Zn(2+). Aspartate 449, aspartate 451, and aspartate 453 together coordinate Mg(2+). Positions 818, 892, 899, and 902 each coordinate Zn(2+).

The protein belongs to the RNA polymerase beta' chain family. The RNAP catalytic core consists of 2 alpha, 1 beta, 1 beta' and 1 omega subunit. When a sigma factor is associated with the core the holoenzyme is formed, which can initiate transcription. Mg(2+) is required as a cofactor. Zn(2+) serves as cofactor.

It catalyses the reaction RNA(n) + a ribonucleoside 5'-triphosphate = RNA(n+1) + diphosphate. Its function is as follows. DNA-dependent RNA polymerase catalyzes the transcription of DNA into RNA using the four ribonucleoside triphosphates as substrates. The polypeptide is DNA-directed RNA polymerase subunit beta' (Listeria innocua serovar 6a (strain ATCC BAA-680 / CLIP 11262)).